A 648-amino-acid polypeptide reads, in one-letter code: Cysteine-rich receptor-like protein kinase 38 (648 aa).

A signal peptide spans 1–25 (MKNSAAIFLTSSLILLLQTLHGVKA). Gnk2-homologous domains lie at 26-127 (GFIC…DQST) and 140-247 (PSPV…FYPF). At 26-278 (GFICVGSSFP…EAISITRLKG (253 aa)) the chain is on the extracellular side. Residues Asn37, Asn63, Asn151, Asn174, and Asn253 are each glycosylated (N-linked (GlcNAc...) asparagine). Residues 279–299 (GIIAIFVVPIVINLLVFIGLI) traverse the membrane as a helical segment. The Cytoplasmic portion of the chain corresponds to 300–648 (RAYTRIRKSY…ELSITELSPR (349 aa)). Positions 339–611 (FSFENKIGQG…VIQWLGSETI (273 aa)) constitute a Protein kinase domain. Residues 345–353 (IGQGGFGSV) and Lys367 contribute to the ATP site. Tyr412 carries the phosphotyrosine modification. The Proton acceptor role is filled by Asp464. Position 468 is a phosphoserine (Ser468). Position 504 is a phosphothreonine (Thr504). Position 512 is a phosphotyrosine (Tyr512).

It belongs to the protein kinase superfamily. Ser/Thr protein kinase family. CRK subfamily.

It localises to the membrane. It carries out the reaction L-seryl-[protein] + ATP = O-phospho-L-seryl-[protein] + ADP + H(+). The catalysed reaction is L-threonyl-[protein] + ATP = O-phospho-L-threonyl-[protein] + ADP + H(+). This is Cysteine-rich receptor-like protein kinase 38 (CRK38) from Arabidopsis thaliana (Mouse-ear cress).